A 188-amino-acid polypeptide reads, in one-letter code: MQFRGNVMQENQNQAAEAVENEMTETASAAHTELEQTPEQRIAGLEAEIAELNDTLLRARAELENQRRRAQDEVAAAHKYAIGKFAAELVTVKDYLEMALLDQSGQIDALKMGVDMTLKQLVSAFDKAQIKDIAPKLGDKLDPHQHQAMSAEESDAEPNTVVRVMQKGYLLADRVLRPAMVVVAKAKA.

It belongs to the GrpE family. Homodimer.

Its subcellular location is the cytoplasm. Participates actively in the response to hyperosmotic and heat shock by preventing the aggregation of stress-denatured proteins, in association with DnaK and GrpE. It is the nucleotide exchange factor for DnaK and may function as a thermosensor. Unfolded proteins bind initially to DnaJ; upon interaction with the DnaJ-bound protein, DnaK hydrolyzes its bound ATP, resulting in the formation of a stable complex. GrpE releases ADP from DnaK; ATP binding to DnaK triggers the release of the substrate protein, thus completing the reaction cycle. Several rounds of ATP-dependent interactions between DnaJ, DnaK and GrpE are required for fully efficient folding. This is Protein GrpE from Chromobacterium violaceum (strain ATCC 12472 / DSM 30191 / JCM 1249 / CCUG 213 / NBRC 12614 / NCIMB 9131 / NCTC 9757 / MK).